Consider the following 351-residue polypeptide: Nicotinate-nucleotide--dimethylbenzimidazole phosphoribosyltransferase (351 aa).

E317 acts as the Proton acceptor in catalysis.

The protein belongs to the CobT family.

The enzyme catalyses 5,6-dimethylbenzimidazole + nicotinate beta-D-ribonucleotide = alpha-ribazole 5'-phosphate + nicotinate + H(+). Its pathway is nucleoside biosynthesis; alpha-ribazole biosynthesis; alpha-ribazole from 5,6-dimethylbenzimidazole: step 1/2. In terms of biological role, catalyzes the synthesis of alpha-ribazole-5'-phosphate from nicotinate mononucleotide (NAMN) and 5,6-dimethylbenzimidazole (DMB). This chain is Nicotinate-nucleotide--dimethylbenzimidazole phosphoribosyltransferase, found in Ectopseudomonas mendocina (strain ymp) (Pseudomonas mendocina).